The primary structure comprises 324 residues: tRNA dimethylallyltransferase (324 aa).

15 to 22 (GPTATGKS) lines the ATP pocket. 17–22 (TATGKS) contributes to the substrate binding site. The tract at residues 40-43 (DSAQ) is interaction with substrate tRNA.

It belongs to the IPP transferase family. Monomer. It depends on Mg(2+) as a cofactor.

It catalyses the reaction adenosine(37) in tRNA + dimethylallyl diphosphate = N(6)-dimethylallyladenosine(37) in tRNA + diphosphate. In terms of biological role, catalyzes the transfer of a dimethylallyl group onto the adenine at position 37 in tRNAs that read codons beginning with uridine, leading to the formation of N6-(dimethylallyl)adenosine (i(6)A). In Moorella thermoacetica (strain ATCC 39073 / JCM 9320), this protein is tRNA dimethylallyltransferase.